The following is an 86-amino-acid chain: Mu-theraphotoxin-Cg2a 1 (86 aa).

A signal peptide spans 1–21 (MKVSVVITLAVLGIMFVWASA). Residues 22–50 (AELEERGSDQRDSPAWLKSMERIFQSEER) constitute a propeptide that is removed on maturation. 3 disulfide bridges follow: Cys52-Cys66, Cys59-Cys71, and Cys65-Cys78. The residue at position 84 (Phe84) is a Phenylalanine amide.

The protein belongs to the neurotoxin 10 (Hwtx-1) family. 37 (Jztx-31) subfamily. As to expression, expressed by the venom gland.

The protein localises to the secreted. Functionally, inhibits both peak current and fast inactivation of voltage-gated sodium channels (Nav) channels. Inhibits the inactivation of Nav on DRG neurons (EC(50)=1.77 uM) and peak current of cardiac myocytes (IC(50)=0.90 uM). The polypeptide is Mu-theraphotoxin-Cg2a 1 (Chilobrachys guangxiensis (Chinese earth tiger tarantula)).